A 234-amino-acid polypeptide reads, in one-letter code: Protein XNDC1N (234 aa).

The polypeptide is Protein XNDC1N (Homo sapiens (Human)).